Here is a 480-residue protein sequence, read N- to C-terminus: uncharacterized protein (480 aa).

A disordered region spans residues 1–20 (MDVKDTGINRSDTPISDQDH).

This is an uncharacterized protein from Arabidopsis thaliana (Mouse-ear cress).